Here is a 230-residue protein sequence, read N- to C-terminus: Phosphoribosylformylglycinamidine synthase subunit PurQ (230 aa).

The Glutamine amidotransferase type-1 domain maps to 2–226 (RVAVIVFPGS…LKTWREQNSV (225 aa)). C86 acts as the Nucleophile in catalysis. Catalysis depends on residues H195 and E197.

Part of the FGAM synthase complex composed of 1 PurL, 1 PurQ and 2 PurS subunits.

Its subcellular location is the cytoplasm. It carries out the reaction N(2)-formyl-N(1)-(5-phospho-beta-D-ribosyl)glycinamide + L-glutamine + ATP + H2O = 2-formamido-N(1)-(5-O-phospho-beta-D-ribosyl)acetamidine + L-glutamate + ADP + phosphate + H(+). The catalysed reaction is L-glutamine + H2O = L-glutamate + NH4(+). It functions in the pathway purine metabolism; IMP biosynthesis via de novo pathway; 5-amino-1-(5-phospho-D-ribosyl)imidazole from N(2)-formyl-N(1)-(5-phospho-D-ribosyl)glycinamide: step 1/2. Its function is as follows. Part of the phosphoribosylformylglycinamidine synthase complex involved in the purines biosynthetic pathway. Catalyzes the ATP-dependent conversion of formylglycinamide ribonucleotide (FGAR) and glutamine to yield formylglycinamidine ribonucleotide (FGAM) and glutamate. The FGAM synthase complex is composed of three subunits. PurQ produces an ammonia molecule by converting glutamine to glutamate. PurL transfers the ammonia molecule to FGAR to form FGAM in an ATP-dependent manner. PurS interacts with PurQ and PurL and is thought to assist in the transfer of the ammonia molecule from PurQ to PurL. The sequence is that of Phosphoribosylformylglycinamidine synthase subunit PurQ from Brevibacillus brevis (strain 47 / JCM 6285 / NBRC 100599).